The sequence spans 159 residues: RNA pyrophosphohydrolase (159 aa).

One can recognise a Nudix hydrolase domain in the interval 6-149 (GYRPNVGIVI…KRNVYRRMMK (144 aa)). Positions 38-59 (GGINSGETAEQAMFRELFEEVG) match the Nudix box motif.

This sequence belongs to the Nudix hydrolase family. RppH subfamily. It depends on a divalent metal cation as a cofactor.

In terms of biological role, accelerates the degradation of transcripts by removing pyrophosphate from the 5'-end of triphosphorylated RNA, leading to a more labile monophosphorylated state that can stimulate subsequent ribonuclease cleavage. The chain is RNA pyrophosphohydrolase from Baumannia cicadellinicola subsp. Homalodisca coagulata.